The sequence spans 39 residues: Cytochrome b559 subunit beta (39 aa).

Residues Trp-14–Ser-30 traverse the membrane as a helical segment. His-18 is a heme binding site.

It belongs to the PsbE/PsbF family. Heterodimer of an alpha subunit and a beta subunit. PSII is composed of 1 copy each of membrane proteins PsbA, PsbB, PsbC, PsbD, PsbE, PsbF, PsbH, PsbI, PsbJ, PsbK, PsbL, PsbM, PsbT, PsbX, PsbY, PsbZ, Psb30/Ycf12, at least 3 peripheral proteins of the oxygen-evolving complex and a large number of cofactors. It forms dimeric complexes. The cofactor is heme b.

Its subcellular location is the plastid. The protein localises to the chloroplast thylakoid membrane. In terms of biological role, this b-type cytochrome is tightly associated with the reaction center of photosystem II (PSII). PSII is a light-driven water:plastoquinone oxidoreductase that uses light energy to abstract electrons from H(2)O, generating O(2) and a proton gradient subsequently used for ATP formation. It consists of a core antenna complex that captures photons, and an electron transfer chain that converts photonic excitation into a charge separation. This is Cytochrome b559 subunit beta from Welwitschia mirabilis (Tree tumbo).